A 251-amino-acid chain; its full sequence is Putative (5-formylfuran-3-yl)methyl phosphate synthase (251 aa).

Catalysis depends on Lys29, which acts as the Schiff-base intermediate with substrate. The Proton acceptor role is filled by Lys87.

It belongs to the MfnB family.

The enzyme catalyses 2 D-glyceraldehyde 3-phosphate = 4-(hydroxymethyl)-2-furancarboxaldehyde phosphate + phosphate + 2 H2O. Functionally, catalyzes the formation of 4-(hydroxymethyl)-2-furancarboxaldehyde phosphate (4-HFC-P) from two molecules of glyceraldehyde-3-P (GA-3-P). This Kitasatospora aureofaciens (Streptomyces aureofaciens) protein is Putative (5-formylfuran-3-yl)methyl phosphate synthase.